A 227-amino-acid chain; its full sequence is Cytochrome c oxidase subunit 2 (227 aa).

Over 1–14 (MAYPFQLGLQDATS) the chain is Mitochondrial intermembrane. A helical membrane pass occupies residues 15 to 45 (PIMEELTNFHDHTLMIVFLISSLVLYIISLM). At 46-59 (LTTKLTHTSTMDAQ) the chain is on the mitochondrial matrix side. A helical transmembrane segment spans residues 60–87 (EVETIWTILPAVILILIALPSLRILYMM). The Mitochondrial intermembrane portion of the chain corresponds to 88–227 (DEINNPVLTV…HFENWSASMI (140 aa)). Positions 161, 196, 198, 200, 204, and 207 each coordinate Cu cation. Glutamate 198 provides a ligand contact to Mg(2+).

This sequence belongs to the cytochrome c oxidase subunit 2 family. Component of the cytochrome c oxidase (complex IV, CIV), a multisubunit enzyme composed of 14 subunits. The complex is composed of a catalytic core of 3 subunits MT-CO1, MT-CO2 and MT-CO3, encoded in the mitochondrial DNA, and 11 supernumerary subunits COX4I, COX5A, COX5B, COX6A, COX6B, COX6C, COX7A, COX7B, COX7C, COX8 and NDUFA4, which are encoded in the nuclear genome. The complex exists as a monomer or a dimer and forms supercomplexes (SCs) in the inner mitochondrial membrane with NADH-ubiquinone oxidoreductase (complex I, CI) and ubiquinol-cytochrome c oxidoreductase (cytochrome b-c1 complex, complex III, CIII), resulting in different assemblies (supercomplex SCI(1)III(2)IV(1) and megacomplex MCI(2)III(2)IV(2)). Found in a complex with TMEM177, COA6, COX18, COX20, SCO1 and SCO2. Interacts with TMEM177 in a COX20-dependent manner. Interacts with COX20. Interacts with COX16. It depends on Cu cation as a cofactor.

It is found in the mitochondrion inner membrane. It catalyses the reaction 4 Fe(II)-[cytochrome c] + O2 + 8 H(+)(in) = 4 Fe(III)-[cytochrome c] + 2 H2O + 4 H(+)(out). Its function is as follows. Component of the cytochrome c oxidase, the last enzyme in the mitochondrial electron transport chain which drives oxidative phosphorylation. The respiratory chain contains 3 multisubunit complexes succinate dehydrogenase (complex II, CII), ubiquinol-cytochrome c oxidoreductase (cytochrome b-c1 complex, complex III, CIII) and cytochrome c oxidase (complex IV, CIV), that cooperate to transfer electrons derived from NADH and succinate to molecular oxygen, creating an electrochemical gradient over the inner membrane that drives transmembrane transport and the ATP synthase. Cytochrome c oxidase is the component of the respiratory chain that catalyzes the reduction of oxygen to water. Electrons originating from reduced cytochrome c in the intermembrane space (IMS) are transferred via the dinuclear copper A center (CU(A)) of subunit 2 and heme A of subunit 1 to the active site in subunit 1, a binuclear center (BNC) formed by heme A3 and copper B (CU(B)). The BNC reduces molecular oxygen to 2 water molecules using 4 electrons from cytochrome c in the IMS and 4 protons from the mitochondrial matrix. This chain is Cytochrome c oxidase subunit 2 (MT-CO2), found in Batomys granti (Luzon hairy-tailed rat).